Here is a 56-residue protein sequence, read N- to C-terminus: Large ribosomal subunit protein bL33 (56 aa).

Residues 1 to 12 (MASKGGRDKIKL) are compositionally biased toward basic and acidic residues. The interval 1-30 (MASKGGRDKIKLESTAGTGHFYTTTKNKRT) is disordered. Positions 15–25 (TAGTGHFYTTT) are enriched in polar residues.

The protein belongs to the bacterial ribosomal protein bL33 family.

This is Large ribosomal subunit protein bL33 from Ralstonia nicotianae (strain ATCC BAA-1114 / GMI1000) (Ralstonia solanacearum).